Consider the following 695-residue polypeptide: Serotransferrin (695 aa).

Positions 1–19 (MRLAAGALLACAALGLCLA) are cleaved as a signal peptide. 2 Transferrin-like domains span residues 25-347 (VRWC…NLRE) and 361-680 (VKWC…NLRK). 2 disulfide bridges follow: Cys28/Cys67 and Cys38/Cys58. At Arg42 the chain carries Dimethylated arginine. Fe(3+)-binding residues include Asp82 and Tyr114. Disulfide bonds link Cys137-Cys213, Cys156-Cys350, Cys177-Cys193, Cys180-Cys196, Cys190-Cys198, Cys246-Cys260, Cys358-Cys612, Cys364-Cys396, Cys374-Cys387, Cys421-Cys690, Cys436-Cys653, Cys468-Cys539, Cys492-Cys681, Cys502-Cys516, Cys513-Cys522, Cys579-Cys593, and Cys631-Cys636. Residues Thr139, Arg143, Ala145, and Gly146 each coordinate hydrogencarbonate. A Fe(3+)-binding site is contributed by Tyr207. His268 is a Fe(3+) binding site. A Phosphoserine modification is found at Ser389. Residues Asp411 and Tyr444 each contribute to the Fe(3+) site. Residues Thr470, Arg474, Ala476, and Gly477 each contribute to the hydrogencarbonate site. A glycan (N-linked (GlcNAc...) asparagine) is linked at Asn509. Tyr533 provides a ligand contact to Fe(3+). Position 601 (His601) interacts with Fe(3+). A Phosphoserine modification is found at Ser682.

It belongs to the transferrin family. In terms of assembly, monomer. Part of a complex composed of SLC40A1/ferroportin, TF/transferrin and HEPH/hephaestin that transfers iron from cells to transferrin. Expressed by the liver and secreted in plasma.

The protein localises to the secreted. Its function is as follows. Transferrins are iron binding transport proteins which can bind two Fe(3+) ions in association with the binding of an anion, usually bicarbonate. It is responsible for the transport of iron from sites of absorption and heme degradation to those of storage and utilization. Serum transferrin may also have a further role in stimulating cell proliferation. This is Serotransferrin (TF) from Oryctolagus cuniculus (Rabbit).